Here is a 603-residue protein sequence, read N- to C-terminus: Serine protease 56 (603 aa).

The N-terminal stretch at 1–19 (MLLAVLLLLPLPSSWFAHG) is a signal peptide. A disordered region spans residues 64–96 (SHECRGSGRPRPQALLQDPPEPGPCGERRPSTA). N-linked (GlcNAc...) asparagine glycosylation occurs at Asn-97. A Peptidase S1 domain is found at 105-337 (IVGGSAAPPG…FKDWLQEQMS (233 aa)). Residues Cys-130 and Cys-146 are joined by a disulfide bond. Active-site charge relay system residues include His-145 and Asp-191. 3 cysteine pairs are disulfide-bonded: Cys-225/Cys-292, Cys-256/Cys-271, and Cys-282/Cys-313. Ser-286 serves as the catalytic Charge relay system. Disordered regions lie at residues 442 to 474 (PARE…NGCP) and 573 to 603 (EGPW…ARQP).

This sequence belongs to the peptidase S1 family. As to expression, expressed neural retina, cornea, sclera and optic nerve.

Serine protease required during eye development. This Homo sapiens (Human) protein is Serine protease 56 (PRSS56).